A 691-amino-acid polypeptide reads, in one-letter code: Methionine--tRNA ligase (691 aa).

The short motif at 12 to 22 (PYANGSFHIGH) is the 'HIGH' region element. Cysteine 143, cysteine 146, cysteine 156, and cysteine 159 together coordinate Zn(2+). A 'KMSKS' region motif is present at residues 341–345 (KMSKS). Residue lysine 344 coordinates ATP. Residues 585–691 (DFVKVDLRIA…PGAQPGMRIH (107 aa)) enclose the tRNA-binding domain.

The protein belongs to the class-I aminoacyl-tRNA synthetase family. MetG type 1 subfamily. As to quaternary structure, homodimer. The cofactor is Zn(2+).

The protein localises to the cytoplasm. The enzyme catalyses tRNA(Met) + L-methionine + ATP = L-methionyl-tRNA(Met) + AMP + diphosphate. Is required not only for elongation of protein synthesis but also for the initiation of all mRNA translation through initiator tRNA(fMet) aminoacylation. This chain is Methionine--tRNA ligase, found in Bordetella avium (strain 197N).